The sequence spans 507 residues: RNA demethylase ALKBH9B (507 aa).

Disordered stretches follow at residues 76 to 102 (GSER…DNHS) and 145 to 183 (QEDE…LSRD). Residues 89–100 (DEKSENGEDCDN) show a composition bias toward basic and acidic residues. Acidic residues predominate over residues 145 to 160 (QEDEFDEEEEEEEEER). Over residues 174-183 (TPEKPKLSRD) the composition is skewed to basic and acidic residues. One can recognise a Fe2OG dioxygenase domain in the interval 317–414 (VPDSCIVNIY…RISITFRKMD (98 aa)). The Fe cation site is built by H335, D337, and H396. Residue R405 coordinates 2-oxoglutarate. A disordered region spans residues 432–507 (EPLPLDLNRS…MPRPSRRNYG (76 aa)). Positions 440–450 (RSGSTSRFSRL) are enriched in polar residues. The span at 497 to 507 (GMPRPSRRNYG) shows a compositional bias: basic residues.

The protein belongs to the alkB family. As to quaternary structure, (Microbial infection) Interacts with the capsid protein ORF3b of the alfalfa mosaic virus (AMV). It depends on Fe(2+) as a cofactor.

The protein resides in the cytoplasm. The protein localises to the P-body. It localises to the cytoplasmic granule. The enzyme catalyses an N(6)-methyladenosine in mRNA + 2-oxoglutarate + O2 = an adenosine in mRNA + formaldehyde + succinate + CO2. In terms of biological role, dioxygenase that demethylates RNA by oxidative demethylation: specifically demethylates N(6)-methyladenosine (m6A) RNA, the most prevalent internal modification of messenger RNA (mRNA) in higher eukaryotes. Modulates viral infection of the alfalfa mosaic virus (AMV) and the m6A abundance in its genomic RNAs. The polypeptide is RNA demethylase ALKBH9B (Arabidopsis thaliana (Mouse-ear cress)).